Reading from the N-terminus, the 68-residue chain is Ferredoxin Fdx (68 aa).

Cys-12, Gln-13, Ala-16, Cys-18, and Cys-56 together coordinate [3Fe-4S] cluster.

It depends on [3Fe-4S] cluster as a cofactor.

In terms of biological role, ferredoxin that is the redox partner of cytochrome CYP51, a sterol 14alpha-demethylase encoded by an adjacent gene. This is Ferredoxin Fdx from Mycobacterium tuberculosis (strain ATCC 25618 / H37Rv).